The following is a 364-amino-acid chain: Phosphoserine aminotransferase (364 aa).

Arginine 41 serves as a coordination point for L-glutamate. Residues 75–76, tryptophan 100, threonine 155, aspartate 175, and glutamine 198 each bind pyridoxal 5'-phosphate; that span reads AS. Position 199 is an N6-(pyridoxal phosphate)lysine (lysine 199). 239 to 240 contacts pyridoxal 5'-phosphate; that stretch reads NT.

It belongs to the class-V pyridoxal-phosphate-dependent aminotransferase family. SerC subfamily. As to quaternary structure, homodimer. Requires pyridoxal 5'-phosphate as cofactor.

It is found in the cytoplasm. The catalysed reaction is O-phospho-L-serine + 2-oxoglutarate = 3-phosphooxypyruvate + L-glutamate. It carries out the reaction 4-(phosphooxy)-L-threonine + 2-oxoglutarate = (R)-3-hydroxy-2-oxo-4-phosphooxybutanoate + L-glutamate. It functions in the pathway amino-acid biosynthesis; L-serine biosynthesis; L-serine from 3-phospho-D-glycerate: step 2/3. Catalyzes the reversible conversion of 3-phosphohydroxypyruvate to phosphoserine and of 3-hydroxy-2-oxo-4-phosphonooxybutanoate to phosphohydroxythreonine. The polypeptide is Phosphoserine aminotransferase (Streptococcus thermophilus (strain CNRZ 1066)).